A 306-amino-acid polypeptide reads, in one-letter code: Ornithine carbamoyltransferase (306 aa).

Carbamoyl phosphate is bound by residues 50–53, glutamine 77, arginine 101, and 128–131; these read STRT and HPCQ. L-ornithine contacts are provided by residues asparagine 160, aspartate 224, and 228-229; that span reads SM. Carbamoyl phosphate-binding positions include 264 to 265 and arginine 292; that span reads CL.

It belongs to the aspartate/ornithine carbamoyltransferase superfamily. OTCase family.

It is found in the cytoplasm. The enzyme catalyses carbamoyl phosphate + L-ornithine = L-citrulline + phosphate + H(+). The protein operates within amino-acid biosynthesis; L-arginine biosynthesis; L-arginine from L-ornithine and carbamoyl phosphate: step 1/3. In terms of biological role, reversibly catalyzes the transfer of the carbamoyl group from carbamoyl phosphate (CP) to the N(epsilon) atom of ornithine (ORN) to produce L-citrulline. The polypeptide is Ornithine carbamoyltransferase (Mycobacterium leprae (strain TN)).